Here is a 57-residue protein sequence, read N- to C-terminus: MFSWKKVLFKGVIAVLSLFVFAVAVFFVGMALLTLDPKDRCLDYGGRYDDATKICEK.

Residues 12–34 traverse the membrane as a helical segment; the sequence is VIAVLSLFVFAVAVFFVGMALLT.

Its subcellular location is the membrane. This is an uncharacterized protein from Pasteurella multocida (strain Pm70).